The chain runs to 608 residues: Phosphoenolpyruvate carboxykinase [GTP] (608 aa).

Residues R82 and 222-224 contribute to the substrate site; that span reads YGG. Mn(2+)-binding residues include K231 and H251. Residue S273 participates in substrate binding. Residue 274-279 participates in GTP binding; it reads ACGKTN. The active site involves C275. D298 provides a ligand contact to Mn(2+). 389-391 contacts substrate; it reads NSR. GTP-binding positions include R391, R422, and 517–520; that span reads FGDN.

This sequence belongs to the phosphoenolpyruvate carboxykinase [GTP] family. As to quaternary structure, monomer. Mn(2+) is required as a cofactor.

It localises to the cytoplasm. The enzyme catalyses oxaloacetate + GTP = phosphoenolpyruvate + GDP + CO2. It participates in carbohydrate biosynthesis; gluconeogenesis. Functionally, catalyzes the conversion of oxaloacetate (OAA) to phosphoenolpyruvate (PEP), the rate-limiting step in the metabolic pathway that produces glucose from lactate and other precursors derived from the citric acid cycle. The sequence is that of Phosphoenolpyruvate carboxykinase [GTP] from Paenarthrobacter aurescens (strain TC1).